Reading from the N-terminus, the 74-residue chain is Translation initiation factor IF-1, chloroplastic (74 aa).

Positions 1 to 72 (MEKQNIIEME…TKGRITYRLR (72 aa)) constitute an S1-like domain.

This sequence belongs to the IF-1 family. In terms of assembly, component of the 30S ribosomal translation pre-initiation complex which assembles on the 30S ribosome in the order IF-2 and IF-3, IF-1 and N-formylmethionyl-tRNA(fMet); mRNA recruitment can occur at any time during PIC assembly.

The protein localises to the plastid. It localises to the chloroplast. One of the essential components for the initiation of protein synthesis. Stabilizes the binding of IF-2 and IF-3 on the 30S subunit to which N-formylmethionyl-tRNA(fMet) subsequently binds. Helps modulate mRNA selection, yielding the 30S pre-initiation complex (PIC). Upon addition of the 50S ribosomal subunit IF-1, IF-2 and IF-3 are released leaving the mature 70S translation initiation complex. This is Translation initiation factor IF-1, chloroplastic from Chlorokybus atmophyticus (Soil alga).